The sequence spans 556 residues: uncharacterized protein (556 aa).

Residues 69 to 129 are disordered; it reads RRGHTSGHAS…SSARSSSTSG (61 aa). Low complexity-rich tracts occupy residues 74-85 and 93-129; these read SGHASEHTSSSR and SMSSSSESDSDSVSSESNPKSYSDSSTSSARSSSTSG. A helical transmembrane segment spans residues 379 to 399; the sequence is LGLYIFIGVLLGLIGVIGLFI. An RING-type; atypical zinc finger spans residues 498–541; that stretch reads CTICLCEYSEESPLYRELPCHHIFHPACIDPYLLKNSDLCPLCK.

The protein localises to the vacuole membrane. It is found in the cell membrane. This is an uncharacterized protein from Schizosaccharomyces pombe (strain 972 / ATCC 24843) (Fission yeast).